The following is a 228-amino-acid chain: ATP-dependent dethiobiotin synthetase BioD (228 aa).

ATP is bound at residue 12-17 (EIGKTT). Thr-16 serves as a coordination point for Mg(2+). Lys-37 is an active-site residue. Ser-41 lines the substrate pocket. ATP is bound by residues Asp-54, 116–119 (EGAG), and 205–207 (PRL). Mg(2+)-binding residues include Asp-54 and Glu-116.

This sequence belongs to the dethiobiotin synthetase family. As to quaternary structure, homodimer. Mg(2+) serves as cofactor.

It is found in the cytoplasm. The catalysed reaction is (7R,8S)-7,8-diammoniononanoate + CO2 + ATP = (4R,5S)-dethiobiotin + ADP + phosphate + 3 H(+). The protein operates within cofactor biosynthesis; biotin biosynthesis; biotin from 7,8-diaminononanoate: step 1/2. Catalyzes a mechanistically unusual reaction, the ATP-dependent insertion of CO2 between the N7 and N8 nitrogen atoms of 7,8-diaminopelargonic acid (DAPA, also called 7,8-diammoniononanoate) to form a ureido ring. This chain is ATP-dependent dethiobiotin synthetase BioD, found in Pseudomonas aeruginosa (strain UCBPP-PA14).